A 795-amino-acid chain; its full sequence is MLLSPEQFSRLSEYAAYSRRKLKDMLSDFQQDGKFYSYLSVDGQTINIDGFRAFLIDYFGADLPSDLVDQLFLSFSKPPIKERRTSLFEDAISTVRAKFSESLSGRMAGLNIAGGSGQQTDRSQSSEPQALVCIPEDDVMGPRVANNDSQEPRIPLKPLICTLSLLEADTPENKLDVVFHVYDSDGNGFLDKSEIDGIIEQMMNVARYQQWDTIELEQVIRQMMVDIDYDNDGIVSFDEWRRGGLTNIPLLVLLGFDTEMKEDGSHVWRLRHFTKPTYCNACCSILVGWGGKQGLSCSLCKYTVHERCVRSAATNCIRTYSSRQQDKLYHHWQDANATAKCVKCKATVGVFQGKGCRWCHNYVHHRCMSALAQECDLGALVHHILPPTHIFPAFLERKTSTSLKNHNFSSHSASLLQAVSPSNDCRPLLVLVNPKSGGKQGVKILQKFEYLLNPRQVYDLSKTGPEPGLQLFSTLKNCNILVCGGDGTIGWVLESMDKMTFPHGRPPVAVLPLGTGNDLARCLRWGGGYENENLHKILEQIEKSSLIDMDRWQIKIEITENKSARRASEKGDTPPYSIINNYFSIGVDASIAHRFHVMREKFPEKFNSRMRNKLWYFELGTSETLSSSCKNLHEQIDILCDGESIDLGQDASLEGIALLNIPSIYGGSNLWGRSRKSKGRMPGLFPMKNAEKMQLQTRVQDIGDGLIELVGLESAMQMGQIKAGVRGARRLSQCSTVVIQTHKSFPMQIDGEPWMQPPCIIQITHKNQAKMLVAAAPRKRSSWMLLKRQSTNDDN.

2 EF-hand domains span residues 170–205 and 215–250; these read TPENKLDVVFHVYDSDGNGFLDKSEIDGIIEQMMNV and ELEQVIRQMMVDIDYDNDGIVSFDEWRRGGLTNIPL. Positions 183, 185, 187, 194, 228, 230, 232, and 239 each coordinate Ca(2+). 2 consecutive Phorbol-ester/DAG-type zinc fingers follow at residues 265 to 316 and 329 to 375; these read SHVW…ATNC and YHHW…AQEC. A DAGKc domain is found at 423–558; that stretch reads NDCRPLLVLV…MDRWQIKIEI (136 aa).

This sequence belongs to the eukaryotic diacylglycerol kinase family. Monomer.

It catalyses the reaction a 1,2-diacyl-sn-glycerol + ATP = a 1,2-diacyl-sn-glycero-3-phosphate + ADP + H(+). Involved in AFD-neuron mediated thermotaxis. Regulates behavior to environmental temperature. Thought to have a role in olfactory adaptation by affecting diacylglycerol levels. This chain is Probable diacylglycerol kinase 3 (dgk-3), found in Caenorhabditis elegans.